The primary structure comprises 209 residues: FAS-associated death domain protein (209 aa).

Residues 3 to 81 (PFLVLLHSVS…RKDLLLRLDD (79 aa)) form the DED domain. The Death domain maps to 97-181 (LRAAMEIICD…VVADLIEEDQ (85 aa)). The span at 187-200 (QSGSANPGSFTAWD) shows a compositional bias: polar residues. The disordered stretch occupies residues 187 to 209 (QSGSANPGSFTAWDSGSAAPGAS).

As to quaternary structure, can self-associate. Component of the AIM2 PANoptosome complex, a multiprotein complex that drives inflammatory cell death (PANoptosis). Component of the death-induced signaling complex (DISC) composed of cell surface receptor FAS/CD95 or TNFRSF1A, adapter protein FADD and the CASP8 protease; recruitment of CASP8 to the complex is required for processing of CASP8 into the p18 and p10 subunits. Interacts (via death domain) with FAS (via death domain). Interacts directly (via DED domain) with NOL3 (via CARD domain); inhibits death-inducing signaling complex (DISC) assembly by inhibiting the increase in FAS-FADD binding induced by FAS activation. Interacts with CFLAR, PEA15 and MBD4. When phosphorylated, part of a complex containing HIPK3 and FAS. May interact with MAVS/IPS1. Interacts with MOCV v-CFLAR protein and PIDD1. Interacts with RIPK1 and TRADD. Interacts with stimulated TNFRSF10B. Interacts with DDX24. Phosphorylated.

It localises to the cytoplasm. Its function is as follows. Apoptotic adapter molecule that recruits caspases CASP8 or CASP10 to the activated FAS/CD95 or TNFRSF1A/TNFR-1 receptors. The resulting aggregate called the death-inducing signaling complex (DISC) performs CASP8 proteolytic activation. Active CASP8 initiates the subsequent cascade of caspases mediating apoptosis. Involved in interferon-mediated antiviral immune response, playing a role in the positive regulation of interferon signaling. In Bos taurus (Bovine), this protein is FAS-associated death domain protein.